An 81-amino-acid chain; its full sequence is Sulfur carrier protein TusA (81 aa).

The active-site Cysteine persulfide intermediate is Cys19.

It belongs to the sulfur carrier protein TusA family. Interacts with IscS.

It is found in the cytoplasm. It participates in tRNA modification. Its function is as follows. Sulfur carrier protein involved in sulfur trafficking in the cell. Part of a sulfur-relay system required for 2-thiolation during synthesis of 2-thiouridine of the modified wobble base 5-methylaminomethyl-2-thiouridine (mnm(5)s(2)U) in tRNA. Interacts with IscS and stimulates its cysteine desulfurase activity. Accepts an activated sulfur from IscS, which is then transferred to TusD, and thus determines the direction of sulfur flow from IscS to 2-thiouridine formation. Also appears to be involved in sulfur transfer for the biosynthesis of molybdopterin. This is Sulfur carrier protein TusA from Escherichia fergusonii (strain ATCC 35469 / DSM 13698 / CCUG 18766 / IAM 14443 / JCM 21226 / LMG 7866 / NBRC 102419 / NCTC 12128 / CDC 0568-73).